The following is a 351-amino-acid chain: Glycerol-1-phosphate dehydrogenase [NAD(P)+] (351 aa).

NAD(+) is bound by residues 97-101 (GKVID) and 119-122 (TSPS). Residue D124 coordinates substrate. An NAD(+)-binding site is contributed by S128. D171 is a binding site for substrate. Positions 171 and 251 each coordinate Zn(2+). H255 contacts substrate. Zn(2+) is bound at residue H267.

Belongs to the glycerol-1-phosphate dehydrogenase family. In terms of assembly, homodimer. Zn(2+) serves as cofactor.

The protein localises to the cytoplasm. The enzyme catalyses sn-glycerol 1-phosphate + NAD(+) = dihydroxyacetone phosphate + NADH + H(+). It carries out the reaction sn-glycerol 1-phosphate + NADP(+) = dihydroxyacetone phosphate + NADPH + H(+). The protein operates within membrane lipid metabolism; glycerophospholipid metabolism. In terms of biological role, catalyzes the NAD(P)H-dependent reduction of dihydroxyacetonephosphate (DHAP or glycerone phosphate) to glycerol 1-phosphate (G1P). The G1P thus generated is used as the glycerophosphate backbone of phospholipids in the cellular membranes of Archaea. The polypeptide is Glycerol-1-phosphate dehydrogenase [NAD(P)+] (Saccharolobus islandicus (strain L.S.2.15 / Lassen #1) (Sulfolobus islandicus)).